Consider the following 214-residue polypeptide: Glycerol-3-phosphate acyltransferase (214 aa).

Transmembrane regions (helical) follow at residues 4–24, 52–72, 82–102, 118–138, and 159–179; these read LIVAVVAYLIGSVSFAVIVSA, AAILTLIGDAFKGWLPVWFVV, DTSVAIAAVAVFLGHLYPAFF, LAINPILGVATLLTWLIVAFF, and FLFGPHIIALAIVVMSSLLVW.

This sequence belongs to the PlsY family. As to quaternary structure, probably interacts with PlsX.

It is found in the cell inner membrane. It catalyses the reaction an acyl phosphate + sn-glycerol 3-phosphate = a 1-acyl-sn-glycero-3-phosphate + phosphate. It functions in the pathway lipid metabolism; phospholipid metabolism. Its function is as follows. Catalyzes the transfer of an acyl group from acyl-phosphate (acyl-PO(4)) to glycerol-3-phosphate (G3P) to form lysophosphatidic acid (LPA). This enzyme utilizes acyl-phosphate as fatty acyl donor, but not acyl-CoA or acyl-ACP. This Paraburkholderia xenovorans (strain LB400) protein is Glycerol-3-phosphate acyltransferase.